Reading from the N-terminus, the 237-residue chain is Purine nucleoside phosphorylase DeoD-type (237 aa).

His4 contributes to the a purine D-ribonucleoside binding site. Residues Gly20, Arg24, Arg43, and 87 to 90 (RVGT) each bind phosphate. Residues 179 to 181 (EME) and 203 to 204 (SD) contribute to the a purine D-ribonucleoside site. Asp204 acts as the Proton donor in catalysis.

This sequence belongs to the PNP/UDP phosphorylase family. Homohexamer; trimer of homodimers.

It catalyses the reaction a purine D-ribonucleoside + phosphate = a purine nucleobase + alpha-D-ribose 1-phosphate. It carries out the reaction a purine 2'-deoxy-D-ribonucleoside + phosphate = a purine nucleobase + 2-deoxy-alpha-D-ribose 1-phosphate. In terms of biological role, catalyzes the reversible phosphorolytic breakdown of the N-glycosidic bond in the beta-(deoxy)ribonucleoside molecules, with the formation of the corresponding free purine bases and pentose-1-phosphate. The sequence is that of Purine nucleoside phosphorylase DeoD-type from Streptococcus gordonii (strain Challis / ATCC 35105 / BCRC 15272 / CH1 / DL1 / V288).